Here is a 593-residue protein sequence, read N- to C-terminus: Aspartate--tRNA ligase (593 aa).

Glu-181 provides a ligand contact to L-aspartate. The interval Gln-205–Lys-208 is aspartate. Residue Arg-227 participates in L-aspartate binding. ATP contacts are provided by residues Arg-227–Glu-229 and Gln-236. Position 455 (His-455) interacts with L-aspartate. Glu-489 contributes to the ATP binding site. Arg-496 is a binding site for L-aspartate. Residue Gly-541–Arg-544 coordinates ATP.

It belongs to the class-II aminoacyl-tRNA synthetase family. Type 1 subfamily. In terms of assembly, homodimer.

It localises to the cytoplasm. It carries out the reaction tRNA(Asp) + L-aspartate + ATP = L-aspartyl-tRNA(Asp) + AMP + diphosphate. Its function is as follows. Catalyzes the attachment of L-aspartate to tRNA(Asp) in a two-step reaction: L-aspartate is first activated by ATP to form Asp-AMP and then transferred to the acceptor end of tRNA(Asp). The polypeptide is Aspartate--tRNA ligase (Ruminiclostridium cellulolyticum (strain ATCC 35319 / DSM 5812 / JCM 6584 / H10) (Clostridium cellulolyticum)).